We begin with the raw amino-acid sequence, 187 residues long: uncharacterized protein (187 aa).

A Nudix hydrolase domain is found at 26 to 157 (NRHAAVLLPI…YLDVSRRGQQ (132 aa)). A Nudix box motif is present at residues 64–86 (GVADPKDKSIIATALREAEEEVN). 2 residues coordinate Mg(2+): glutamate 80 and glutamate 84.

Belongs to the Nudix hydrolase family. PCD1 subfamily. The cofactor is Mn(2+). Requires Mg(2+) as cofactor.

Functionally, probably mediates the hydrolysis of some nucleoside diphosphate derivatives. This is an uncharacterized protein from Photorhabdus laumondii subsp. laumondii (strain DSM 15139 / CIP 105565 / TT01) (Photorhabdus luminescens subsp. laumondii).